Reading from the N-terminus, the 424-residue chain is MAKNIQAIRGMNDYLPAETALWQRIENSLKQVLSGYGYNEIRLPIVEQTPLFKRAIGEVTDVVEKEMYTFDDRNGDSLTLRPEGTAGCVRAGIEHGILYNQEQRLWYVGPMFRYERPQKGRYRQFHQLGCEVFGLQGPDIDAELILMTARWWRVLGIADHVKLELNSIGSLDARARYREALVAFLEQHKDQLDEDCLRRMYTNPLRVLDTKNPQIQVLLNDAPVLTDYLDDESREHFEALGELLTQSGIPYTVNPRLVRGLDYYNRTVFEWVTTSLGAQGTVCAGGRYDGMVEQLGGHATPAVGFAMGLERLVLLVQSVNPDFKAQPGVDVYLISSGAGTQVAAMQLAEKLRDALPQLKLMTNYGGGNFKKQFARADKWGARVALVLGENEVAAGQVVVKNLSNGEQDTLAQADVASRLATLLD.

It belongs to the class-II aminoacyl-tRNA synthetase family. Homodimer.

It is found in the cytoplasm. It catalyses the reaction tRNA(His) + L-histidine + ATP = L-histidyl-tRNA(His) + AMP + diphosphate + H(+). This is Histidine--tRNA ligase from Pectobacterium carotovorum subsp. carotovorum (strain PC1).